We begin with the raw amino-acid sequence, 169 residues long: Large ribosomal subunit protein uL15 (169 aa).

The segment covering 1–13 has biased composition (basic and acidic residues); that stretch reads MKLNEIRDNEGAT. The disordered stretch occupies residues 1 to 40; that stretch reads MKLNEIRDNEGATKNRMRVGRGIGSGKGKTGGRGVKGQKA. The span at 21-35 shows a compositional bias: gly residues; it reads RGIGSGKGKTGGRGV.

The protein belongs to the universal ribosomal protein uL15 family. In terms of assembly, part of the 50S ribosomal subunit.

Its function is as follows. Binds to the 23S rRNA. The sequence is that of Large ribosomal subunit protein uL15 from Methylorubrum populi (strain ATCC BAA-705 / NCIMB 13946 / BJ001) (Methylobacterium populi).